A 395-amino-acid polypeptide reads, in one-letter code: 8-amino-7-oxononanoate synthase (395 aa).

Pyridoxal 5'-phosphate is bound at residue 108 to 109 (GF). H134 serves as a coordination point for substrate. Residues S184, 209 to 212 (DDAH), and 240 to 243 (TLSK) each bind pyridoxal 5'-phosphate. K243 carries the post-translational modification N6-(pyridoxal phosphate)lysine. Position 357 (T357) interacts with substrate.

It belongs to the class-II pyridoxal-phosphate-dependent aminotransferase family. BioF subfamily. Homodimer. Requires pyridoxal 5'-phosphate as cofactor.

It carries out the reaction 6-carboxyhexanoyl-[ACP] + L-alanine + H(+) = (8S)-8-amino-7-oxononanoate + holo-[ACP] + CO2. The protein operates within cofactor biosynthesis; biotin biosynthesis. Its function is as follows. Catalyzes the decarboxylative condensation of pimeloyl-[acyl-carrier protein] and L-alanine to produce 8-amino-7-oxononanoate (AON), [acyl-carrier protein], and carbon dioxide. The polypeptide is 8-amino-7-oxononanoate synthase (Fervidobacterium nodosum (strain ATCC 35602 / DSM 5306 / Rt17-B1)).